A 189-amino-acid chain; its full sequence is MPDDPIQDILDEADEEMEESVSYMRSELRTIRAGRASPAMLENVTVEYYGSQTPLEQVASVSAPQPDLIVVQPFDRNAIENIERGIMKADLGLNPNNDGEKIRIPIPPLSEERRKELVETSRERAEETKISIRNIRRDAKNEIQNVVEAENFSEDVLYGAEEDLQDITDAHTETVEGLLEQKTEQIMDV.

It belongs to the RRF family.

The protein resides in the cytoplasm. Responsible for the release of ribosomes from messenger RNA at the termination of protein biosynthesis. May increase the efficiency of translation by recycling ribosomes from one round of translation to another. This chain is Ribosome-recycling factor, found in Salinibacter ruber (strain DSM 13855 / M31).